The primary structure comprises 866 residues: MFSMRIVCLVLSVVGTAWTADSGEGDFLAEGGGVRGPRVVERHQSACKDSDWPFCSDEDWNYKCPSGCRMKGLIDEVNQDFTNRINKLKNSLFEYQKNNKDSHSLTTNIMEILRGDFSSANNRDNTYNRVSEDLRSRIEVLKRKVIEKVQHIQLLQKNVRAQLVDMKRLEVDIDIKIRSCRGSCSRALAREVDLKDYEDQQKQLEQVIAKDLLPSRDRQHLPLIKMKPVPDLVPGNFKSQLQKVPPEWKALTDMPQMRMELERPGGNEITRGGSTSYGTGSETESPRNPSSAGSWNSGSSGPGSTGNRNPGSSGTGGTATWKPGSSGPGSTGSWNSGSSGTGSTGNQNPGSPRPGSTGTWNPGSSERGSAGHWTSESSVSGSTGQWHSESGSFRPDSPGSGNARPNNPDWGTFEEVSGNVSPGTRREYHTEKLVTSKGDKELRTGKEKVTSGSTTTTRRSCSKTVTKTVIGPDGHKEVTKEVVTSEDGSDCPEAMDLGTLSGIGTLDGFRHRHPDEAAFFDTASTGKTFPGFFSPMLGEFVSETESRGSESGIFTNTKESSSHHPGIAEFPSRGKSSSYSKQFTSSTSYNRGDSTFESKSYKMADEAGSEADHEGTHSTKRGHAKSRPVRDCDDVLQTHPSGTQSGIFNIKLPGSSKIFSVYCDQETSLGGWLLIQQRMDGSLNFNRTWQDYKRGFGSLNDEGEGEFWLGNDYLHLLTQRGSVLRVELEDWAGNEAYAEYHFRVGSEAEGYALQVSSYEGTAGDALIEGSVEEGAEYTSHNNMQFSTFDRDADQWEENCAEVYGGGWWYNNCQAANLNGIYYPGGSYDPRNNSPYEIENGVVWVSFRGADYSLRAVRMKIRPLVTQ.

The first 19 residues, 1–19 (MFSMRIVCLVLSVVGTAWT), serve as a signal peptide directing secretion. Ser-22 is modified (phosphoserine). The alpha-chain polymerization, binding distal domain of another fibrin gamma chain stretch occupies residues 36–38 (GPR). Phosphoserine; by FAM20C is present on Ser-45. Position 50 is a phosphoserine (Ser-50). Ser-56 carries the post-translational modification Phosphoserine; by FAM20C. Residues 68–631 (CRMKGLIDEV…GHAKSRPVRD (564 aa)) are a coiled coil. The tract at residues 262 to 460 (ERPGGNEITR…SGSTTTTRRS (199 aa)) is disordered. Over residues 270-299 (TRGGSTSYGTGSETESPRNPSSAGSWNSGS) the composition is skewed to low complexity. Residues Ser-281, Ser-291, and Ser-294 each carry the phosphoserine modification. Residue Thr-320 is glycosylated (O-linked (GalNAc...) threonine). Residue Lys-322 forms an Isoglutamyl lysine isopeptide (Lys-Gln) (interchain with Q-41 in alpha-2-antiplasmin) linkage. Gln-347 participates in a covalent cross-link: Isoglutamyl lysine isopeptide (Gln-Lys) (interchain with K-?). A glycan (O-linked (GalNAc...) serine) is linked at Ser-351. Polar residues predominate over residues 354–391 (PGSTGTWNPGSSERGSAGHWTSESSVSGSTGQWHSESG). Ser-364 is subject to Phosphoserine; by FAM20C. An Isoglutamyl lysine isopeptide (Gln-Lys) (interchain with K-?) cross-link involves residue Gln-385. A Phosphothreonine modification is found at Thr-412. Basic and acidic residues predominate over residues 424-449 (TRREYHTEKLVTSKGDKELRTGKEKV). Residues 450–460 (TSGSTTTTRRS) are compositionally biased toward low complexity. Residue Ser-451 is modified to Phosphoserine. The N-linked (GlcNAc...) asparagine; in variant Caracas-2 glycan is linked to Ser-453. Cys-461 and Cys-491 are oxidised to a cystine. Position 501 is a phosphoserine (Ser-501). The residue at position 505 (Thr-505) is a Phosphothreonine. Phosphoserine; by FAM20C is present on Ser-524. Residues Lys-527 and Lys-558 each participate in an isoglutamyl lysine isopeptide (Lys-Gln) (interchain with Q-?) cross-link. The interval 543–638 (ETESRGSESG…VRDCDDVLQT (96 aa)) is disordered. Ser-560 bears the Phosphoserine; by FAM20C mark. Pro-565 is modified (4-hydroxyproline; by P4HA1). Isoglutamyl lysine isopeptide (Lys-Gln) (interchain with Q-?) cross-links involve residues Lys-575, Lys-581, and Lys-599. A compositionally biased stretch (low complexity) spans 575–589 (KSSSYSKQFTSSTSY). The segment covering 594–617 (STFESKSYKMADEAGSEADHEGTH) has biased composition (basic and acidic residues). The residue at position 609 (Ser-609) is a Phosphoserine; by FAM20C. Positions 618 to 627 (STKRGHAKSR) are enriched in basic residues. Residues 623-864 (HAKSRPVRDC…AVRMKIRPLV (242 aa)) enclose the Fibrinogen C-terminal domain. The N-linked (GlcNAc...) asparagine glycan is linked to Asn-686. Ca(2+) is bound by residues Asp-791, Asp-793, Trp-795, and Glu-797. Cys-799 and Cys-812 are joined by a disulfide.

Heterohexamer; disulfide linked. Contains 2 sets of 3 non-identical chains (alpha, beta and gamma). The 2 heterotrimers are in head to head conformation with the N-termini in a small central domain. As to quaternary structure, (Microbial infection) Interacts with Staphylococcus aureus protein Fib; this interaction inhibits fibrinogen-dependent platelet aggregation and protects the bacteria form phagocytosis. The alpha chain is normally not N-glycosylated, even though glycosylation at Asn-686 was observed when a fragment of the protein was expressed in insect cells. It is well known that heterologous expression of isolated domains can lead to adventitious protein modifications. Besides, glycosylation at Asn-686 is supported by large-scale glycoproteomics studies, but the evidence is still quite tenuous. Most likely, Asn-686 is not glycosylated in the healthy human body, or only with low efficiency. Post-translationally, O-glycosylated. In terms of processing, forms F13A-mediated cross-links between a glutamine and the epsilon-amino group of a lysine residue, forming fibronectin-fibrinogen heteropolymers. About one-third of the alpha chains in the molecules in blood were found to be phosphorylated. Post-translationally, conversion of fibrinogen to fibrin is triggered by thrombin, which cleaves fibrinopeptides A and B from alpha and beta chains, and thus exposes the N-terminal polymerization sites responsible for the formation of the soft clot. The soft clot is converted into the hard clot by factor XIIIA which catalyzes the epsilon-(gamma-glutamyl)lysine cross-linking between gamma chains (stronger) and between alpha chains (weaker) of different monomers. In terms of processing, phosphorylated by FAM20C in the extracellular medium. In terms of tissue distribution, detected in blood plasma (at protein level).

It is found in the secreted. Functionally, cleaved by the protease thrombin to yield monomers which, together with fibrinogen beta (FGB) and fibrinogen gamma (FGG), polymerize to form an insoluble fibrin matrix. Fibrin has a major function in hemostasis as one of the primary components of blood clots. In addition, functions during the early stages of wound repair to stabilize the lesion and guide cell migration during re-epithelialization. Was originally thought to be essential for platelet aggregation, based on in vitro studies using anticoagulated blood. However, subsequent studies have shown that it is not absolutely required for thrombus formation in vivo. Enhances expression of SELP in activated platelets via an ITGB3-dependent pathway. Maternal fibrinogen is essential for successful pregnancy. Fibrin deposition is also associated with infection, where it protects against IFNG-mediated hemorrhage. May also facilitate the immune response via both innate and T-cell mediated pathways. This chain is Fibrinogen alpha chain (FGA), found in Homo sapiens (Human).